Reading from the N-terminus, the 115-residue chain is Rapid alkalinization factor (115 aa).

Residues 1–23 (MGVPSGLILCVLIGAFFISMAAA) form the signal peptide. A propeptide spans 24–66 (GDSGAYDWVMPARSGGGCKGSIGECIAEEEEFELDSESNRRIL) (removed in mature form). 2 disulfide bridges follow: C84-C94 and C107-C113.

Proteolytically cleaved, probably by S1P, a subtilisin-like serine protease (subtilase).

The protein localises to the secreted. Cell signaling peptide that may regulate plant stress, growth, and development. Mediates a rapid alkalinization of extracellular space by mediating a transient increase in the cytoplasmic Ca(2+) concentration leading to a calcium-dependent signaling events through a cell surface receptor and a concomitant activation of some intracellular mitogen-activated protein kinases. Prevents root growth and seedling development in heterologous system. The polypeptide is Rapid alkalinization factor (RALF) (Nicotiana tabacum (Common tobacco)).